The primary structure comprises 290 residues: MSNKEGSGGFRKRKHDNFPHNQRREGKDVNSSSPVMLAFKSFQQELDARHDKYERLVKLSRDITVESKRTIFLLHRITSAPDMEDILTESEIKLDGVRQKIFQVAQELSGEDMHQFHRAITTGLQEYVEAVSFQHFIKTRSLISMDEINKQLIFTTEDNGKENKTPSSDAQDKQFGTWRLRVTPVDYLLGVADLTGELMRMCINSVGNGDIDTPFEVSQFLRQVYDGFSFIGNTGPYEVSKKLYTLKQSLAKVENACYALKVRGSEIPKHMLADVFSVKTEMIDQEEGIS.

Residues 1–32 are disordered; sequence MSNKEGSGGFRKRKHDNFPHNQRREGKDVNSS. A compositionally biased stretch (basic and acidic residues) spans 16-28; that stretch reads DNFPHNQRREGKD. The segment at 73–208 is interaction with C1D; it reads LLHRITSAPD…MRMCINSVGN (136 aa). 2 residues coordinate Mg(2+): glutamate 129 and glutamate 197. Lysine 279 is covalently cross-linked (Glycyl lysine isopeptide (Lys-Gly) (interchain with G-Cter in SUMO2)).

The protein belongs to the translin family. In terms of assembly, ring-shaped heterooctamer of six TSN and two TSNAX subunits. Interacts with GOLGA3, TSNAXIP1, SUN1 and AKAP9. Interacts with the homodimeric form of C1D following gamma-radiation. Interacts with TSN and C1D in a mutually exclusive manner. In terms of processing, sumoylated with SUMO1.

The protein localises to the cytoplasm. The protein resides in the perinuclear region. It is found in the golgi apparatus. Its subcellular location is the nucleus. Acts in combination with TSN as an endonuclease involved in the activation of the RNA-induced silencing complex (RISC). Possible role in spermatogenesis. In Pongo abelii (Sumatran orangutan), this protein is Translin-associated protein X (TSNAX).